Here is a 496-residue protein sequence, read N- to C-terminus: Serine/threonine-protein kinase chk1 (496 aa).

Positions 10 to 272 constitute a Protein kinase domain; that stretch reads YHIGREIGTG…VKHVVQHPWL (263 aa). ATP is bound by residues 16 to 24 and Lys38; that span reads IGTGAFASV. Catalysis depends on Asp137, which acts as the Proton acceptor.

This sequence belongs to the protein kinase superfamily. CAMK Ser/Thr protein kinase family. NIM1 subfamily. Interacts with crb2. Interacts with rad3. Interacts with rfp1. In terms of processing, phosphorylated.

The protein resides in the nucleus. It carries out the reaction L-seryl-[protein] + ATP = O-phospho-L-seryl-[protein] + ADP + H(+). The enzyme catalyses L-threonyl-[protein] + ATP = O-phospho-L-threonyl-[protein] + ADP + H(+). Serine/threonine-protein kinase which is required for checkpoint-mediated cell cycle arrest and activation of DNA repair in response to the presence of DNA damage or unreplicated DNA. May also negatively regulate cell cycle progression during unperturbed cell cycles. Binds to and phosphorylates CDC25. This leads to negative regulation of CDC25 and prevents mitotic entry. The polypeptide is Serine/threonine-protein kinase chk1 (chk1) (Schizosaccharomyces pombe (strain 972 / ATCC 24843) (Fission yeast)).